Reading from the N-terminus, the 200-residue chain is Formate dehydrogenase iron-sulfur subunit (200 aa).

4Fe-4S ferredoxin-type domains follow at residues 7–37 (VKFY…VGVN), 50–81 (GKEK…VRAD), and 82–111 (GIVL…FPKS). [4Fe-4S] cluster-binding residues include Cys-16, Cys-19, Cys-22, Cys-26, Cys-59, Cys-62, Cys-67, Cys-71, Cys-91, Cys-94, Cys-97, Cys-101, Cys-123, Cys-126, Cys-155, and Cys-159.

In terms of assembly, formate dehydrogenase is a membrane-bound complex, formed of at least three different subunits. It depends on [4Fe-4S] cluster as a cofactor.

Functionally, this chain is an electron transfer unit containing 18 cysteine residues, 16 of which occur in four clusters. In Wolinella succinogenes (strain ATCC 29543 / DSM 1740 / CCUG 13145 / JCM 31913 / LMG 7466 / NCTC 11488 / FDC 602W) (Vibrio succinogenes), this protein is Formate dehydrogenase iron-sulfur subunit (fdhB1).